Consider the following 912-residue polypeptide: Probable dipeptidyl-aminopeptidase B (912 aa).

Residues 1–74 are disordered; sequence MSSALSPEGD…GPFLGPGASL (74 aa). Topologically, residues 1–85 are cytoplasmic; sequence MSSALSPEGD…REPMDRGLRR (85 aa). The span at 16 to 27 shows a compositional bias: low complexity; it reads DSLSSVSTTSLV. Basic and acidic residues predominate over residues 30–50; that stretch reads RIQEKTEMDADNDKEKDPRAL. The span at 51-63 shows a compositional bias: acidic residues; that stretch reads DDEDPLRDEDDLE. The helical; Signal-anchor for type II membrane protein transmembrane segment at 86–106 threads the bilayer; that stretch reads ILIIVAVVFIGGWLAGLGIFI. At 107–912 the chain is on the vacuolar side; sequence ASGSYHHESD…KRHMVPQALV (806 aa). Residue N344 is glycosylated (N-linked (GlcNAc...) asparagine). S749 (charge relay system) is an active-site residue. An N-linked (GlcNAc...) asparagine glycan is attached at N808. Catalysis depends on charge relay system residues D826 and H859. The segment at 892 to 912 is disordered; it reads PQPQKDPVEKEKRHMVPQALV.

It belongs to the peptidase S9B family.

It localises to the vacuole membrane. The enzyme catalyses Release of an N-terminal dipeptide, Xaa-Yaa-|-Zaa-, from a polypeptide, preferentially when Yaa is Pro, provided Zaa is neither Pro nor hydroxyproline.. Its function is as follows. Type IV dipeptidyl-peptidase which removes N-terminal dipeptides sequentially from polypeptides having unsubstituted N-termini provided that the penultimate residue is proline. The polypeptide is Probable dipeptidyl-aminopeptidase B (DAPB) (Fusarium vanettenii (strain ATCC MYA-4622 / CBS 123669 / FGSC 9596 / NRRL 45880 / 77-13-4) (Fusarium solani subsp. pisi)).